Reading from the N-terminus, the 256-residue chain is Trypsinogen-like protein 3 (256 aa).

Positions 1–14 (MILLLVLALGLAGA) are cleaved as a signal peptide. One can recognise a Peptidase S1 domain in the interval 15-237 (SPLGEYKECP…YNDWIHQVMA (223 aa)). 6 disulfides stabilise this stretch: Cys-23–Cys-153, Cys-41–Cys-57, Cys-125–Cys-226, Cys-132–Cys-199, Cys-164–Cys-180, and Cys-189–Cys-213.

It belongs to the peptidase S1 family.

This chain is Trypsinogen-like protein 3 (trp3), found in Pseudopleuronectes americanus (Winter flounder).